Reading from the N-terminus, the 250-residue chain is Tetrathionate reductase subunit B (250 aa).

Positions 1–33 form a signal peptide, tat-type signal; that stretch reads MWTGVNMDSSKRQFLQQLGVLTAGASLVPLAEA. 4Fe-4S ferredoxin-type domains follow at residues 50–79, 97–128, and 129–158; these read YAMLIDLRRCIGCQSCTVSCTIENQTPQGA, VTNVLLPRLCNHCDNPPCVPVCPVQATFQRED, and GIVVVDNKRCVGCAYCVQACPYDARFINHE. Residues Cys59, Cys62, Cys65, Cys69, Cys106, Cys109, Cys114, Cys118, Cys138, Cys141, Cys144, Cys148, Cys165, Cys168, Cys180, and Cys184 each coordinate [4Fe-4S] cluster.

Probably composed of three subunits: TtrA, TtrB and TtrC. Post-translationally, predicted to be exported by the Tat system. The position of the signal peptide cleavage has not been experimentally proven.

The protein resides in the periplasm. The protein localises to the cell inner membrane. Functionally, part of a membrane-bound tetrathionate reductase that catalyzes the reduction of tetrathionate to thiosulfate. TtrB is probably involved in transfer of electrons from TtrC to TtrA. During mice infection, the ability to use tetrathionate as an electron acceptor is a growth advantage for S.typhimurium over the competing microbiota in the lumen of the inflamed gut. This Salmonella typhimurium (strain LT2 / SGSC1412 / ATCC 700720) protein is Tetrathionate reductase subunit B (ttrB).